The chain runs to 396 residues: L-lactate dehydrogenase (396 aa).

Residues 1-380 (MIISAASDYR…SQDSLVQELD (380 aa)) form the FMN hydroxy acid dehydrogenase domain. Tyrosine 24 lines the substrate pocket. FMN-binding residues include serine 106 and glutamine 127. Residue tyrosine 129 participates in substrate binding. Threonine 155 contacts FMN. Arginine 164 serves as a coordination point for substrate. Lysine 251 is a binding site for FMN. The Proton acceptor role is filled by histidine 275. Residue arginine 278 coordinates substrate. Residue 306-330 (DSGIRNGLDVVRMIALGADTVLLGR) coordinates FMN.

Belongs to the FMN-dependent alpha-hydroxy acid dehydrogenase family. FMN is required as a cofactor.

It is found in the cell inner membrane. The catalysed reaction is (S)-lactate + A = pyruvate + AH2. Functionally, catalyzes the conversion of L-lactate to pyruvate. Is coupled to the respiratory chain. This is L-lactate dehydrogenase from Escherichia fergusonii (strain ATCC 35469 / DSM 13698 / CCUG 18766 / IAM 14443 / JCM 21226 / LMG 7866 / NBRC 102419 / NCTC 12128 / CDC 0568-73).